A 187-amino-acid polypeptide reads, in one-letter code: MNETQIQRETRQVVEDVLEKTNLKQGALFVLGLSSSEVLGGHIGKESSQEIGELIVETILDILGSRGIHLAVQGCEHVNRALVVERQVAEQFGLEIVSVHPTLHAGGSGQLAAFKFMQDPVEVEFIKAHAGLDIGDTAIGMHVKHVQVPIRPILREIGHAHVTALASRPKLIGGARAHYPQDAIRKT.

This sequence belongs to the UPF0340 family.

The polypeptide is UPF0340 protein SPN23F05980 (Streptococcus pneumoniae (strain ATCC 700669 / Spain 23F-1)).